The chain runs to 355 residues: DnaJ homolog dnj-20 (355 aa).

Positions 1–21 (MRILNVSLLVLASSLVAFVEC) are cleaved as a signal peptide. The 66-residue stretch at 24–89 (DFYKILGVAK…EKRAMYDRHG (66 aa)) folds into the J domain.

This is DnaJ homolog dnj-20 from Caenorhabditis elegans.